We begin with the raw amino-acid sequence, 302 residues long: Bifunctional ligase/repressor BirA (302 aa).

A DNA-binding region (H-T-H motif) is located at residues 14–33; sequence QPKVRSELEKFSKNLEEDIQ. Positions 62–236 constitute a BPL/LPL catalytic domain; it reads QISTALFPYS…HLYTRLNIFE (175 aa). Biotin is bound by residues 80–82, Gln103, 107–109, and Lys167; these read STN and RGR.

The protein belongs to the biotin--protein ligase family.

The enzyme catalyses biotin + L-lysyl-[protein] + ATP = N(6)-biotinyl-L-lysyl-[protein] + AMP + diphosphate + H(+). Functionally, acts both as a biotin--[acetyl-CoA-carboxylase] ligase and a biotin-operon repressor. In the presence of ATP, BirA activates biotin to form the BirA-biotinyl-5'-adenylate (BirA-bio-5'-AMP or holoBirA) complex. HoloBirA can either transfer the biotinyl moiety to the biotin carboxyl carrier protein (BCCP) subunit of acetyl-CoA carboxylase, or bind to the biotin operator site and inhibit transcription of the operon. The chain is Bifunctional ligase/repressor BirA from Haemophilus influenzae (strain ATCC 51907 / DSM 11121 / KW20 / Rd).